Consider the following 418-residue polypeptide: GTPase Obg (418 aa).

In terms of domain architecture, Obg spans 1 to 156; that stretch reads MKFIDEITLN…KKLTLVLKVL (156 aa). Positions 157–324 constitute an OBG-type G domain; it reads ADVGFVGKPS…LKEALWQSVK (168 aa). Residues 163–170, 188–192, 209–212, 278–281, and 305–307 contribute to the GTP site; these read GKPSAGKS, FTTLV, DLPG, NKKD, and SAL. Mg(2+) is bound by residues S170 and T190. One can recognise an OCT domain in the interval 339–417; sequence VFINFEADFN…IYDYEFVWGN (79 aa).

The protein belongs to the TRAFAC class OBG-HflX-like GTPase superfamily. OBG GTPase family. In terms of assembly, monomer. Requires Mg(2+) as cofactor.

It is found in the cytoplasm. In terms of biological role, an essential GTPase which binds GTP, GDP and possibly (p)ppGpp with moderate affinity, with high nucleotide exchange rates and a fairly low GTP hydrolysis rate. Plays a role in control of the cell cycle, stress response, ribosome biogenesis and in those bacteria that undergo differentiation, in morphogenesis control. The sequence is that of GTPase Obg from Mycoplasmopsis pulmonis (strain UAB CTIP) (Mycoplasma pulmonis).